A 375-amino-acid polypeptide reads, in one-letter code: Carbamoyl phosphate synthase small chain (375 aa).

Residues 1 to 184 are CPSase; it reads MVSLYLENGL…LDYKPFDEKT (184 aa). L-glutamine-binding residues include Ser-44, Gly-240, and Gly-242. The region spanning 188–375 is the Glutamine amidotransferase type-1 domain; sequence IIAVLDFGAK…KEFVELLKDF (188 aa). The Nucleophile role is filled by Cys-268. 4 residues coordinate L-glutamine: Leu-269, Gln-272, Asn-310, and Tyr-313. Active-site residues include His-351 and Glu-353.

It belongs to the CarA family. As to quaternary structure, composed of two chains; the small (or glutamine) chain promotes the hydrolysis of glutamine to ammonia, which is used by the large (or ammonia) chain to synthesize carbamoyl phosphate. Tetramer of heterodimers (alpha,beta)4.

It catalyses the reaction hydrogencarbonate + L-glutamine + 2 ATP + H2O = carbamoyl phosphate + L-glutamate + 2 ADP + phosphate + 2 H(+). It carries out the reaction L-glutamine + H2O = L-glutamate + NH4(+). It participates in amino-acid biosynthesis; L-arginine biosynthesis; carbamoyl phosphate from bicarbonate: step 1/1. Its pathway is pyrimidine metabolism; UMP biosynthesis via de novo pathway; (S)-dihydroorotate from bicarbonate: step 1/3. Small subunit of the glutamine-dependent carbamoyl phosphate synthetase (CPSase). CPSase catalyzes the formation of carbamoyl phosphate from the ammonia moiety of glutamine, carbonate, and phosphate donated by ATP, constituting the first step of 2 biosynthetic pathways, one leading to arginine and/or urea and the other to pyrimidine nucleotides. The small subunit (glutamine amidotransferase) binds and cleaves glutamine to supply the large subunit with the substrate ammonia. The chain is Carbamoyl phosphate synthase small chain from Helicobacter pylori (strain ATCC 700392 / 26695) (Campylobacter pylori).